A 505-amino-acid chain; its full sequence is L-amino-acid oxidase (505 aa).

The first 18 residues, 1-18 (MNVFLMFSLLFLAALGSC), serve as a signal peptide directing secretion. The cysteines at positions 28 and 191 are disulfide-linked. FAD is bound by residues 61-62 (MS), 81-82 (EA), R89, and 105-108 (GPMR). Position 108 (R108) interacts with substrate. N-linked (GlcNAc...) asparagine glycosylation occurs at N190. Substrate is bound at residue H241. V279 provides a ligand contact to FAD. C349 and C430 form a disulfide bridge. A glycan (N-linked (GlcNAc...) asparagine) is linked at N379. Residue Y390 participates in substrate binding. FAD is bound by residues E475 and 482–487 (GWIDST). 482–483 (GW) contacts substrate.

The protein belongs to the flavin monoamine oxidase family. FIG1 subfamily. In terms of assembly, monomer. This is in contrast with most of its orthologs, that are non-covalently linked homodimers. Requires FAD as cofactor. In terms of processing, N-glycosylated. As to expression, expressed by the venom gland.

It localises to the secreted. It catalyses the reaction an L-alpha-amino acid + O2 + H2O = a 2-oxocarboxylate + H2O2 + NH4(+). It carries out the reaction L-leucine + O2 + H2O = 4-methyl-2-oxopentanoate + H2O2 + NH4(+). Catalyzes an oxidative deamination of predominantly hydrophobic and aromatic L-amino acids, thus producing hydrogen peroxide that may contribute to the diverse toxic effects of this enzyme. Shows activity on L-Leu. Exhibits diverse biological activities, such as hemorrhage, edema, antibacterial and antiparasitic activities, as well as regulation of platelet aggregation. Effects of snake L-amino oxidases on platelets are controversial, since they either induce aggregation or inhibit agonist-induced aggregation. These different effects are probably due to different experimental conditions. This protein has an ability to induce hemolysis and apoptosis. The protein is L-amino-acid oxidase of Protobothrops flavoviridis (Habu).